Reading from the N-terminus, the 629-residue chain is Polygalacturonase non-catalytic subunit AroGP2 (629 aa).

The first 27 residues, 1–27 (MHNKILVSSYILLVLLFSLSSFNIVVA), serve as a signal peptide directing secretion. Positions 28–109 (KDGDESGNPF…MCAPDLLPSL (82 aa)) are excised as a propeptide. N-linked (GlcNAc...) asparagine glycosylation is found at Asn125, Asn143, Asn255, Asn277, Asn333, Asn368, and Asn386. Residues 267 to 293 (YGQNANGENQNFTSYSTNGNNPQNNFK) show a composition bias toward polar residues. Residues 267 to 305 (YGQNANGENQNFTSYSTNGNNPQNNFKNYGVGGNGPSET) form a disordered region. Residues 414–628 (FFREKMLKSG…FENDMTWATA (215 aa)) form the BURP domain.

As to quaternary structure, interacts with polygalacturonase to form heterodimers.

The protein resides in the secreted. It localises to the extracellular space. Its subcellular location is the apoplast. The protein localises to the cell wall. In terms of biological role, non-catalytic subunit of polygalacturonase. The polypeptide is Polygalacturonase non-catalytic subunit AroGP2 (GP2) (Solanum lycopersicum (Tomato)).